The primary structure comprises 57 residues: Conotoxin reg3.17 (57 aa).

Residues 1-16 (TICLLLFPLTVVPLDG) form the signal peptide. Positions 17 to 44 (DQPAHQPAVRKHNIKSAVQLRQWDEEQQ) are excised as a propeptide. Cystine bridges form between C45/C57, C46/C53, and C50/C56.

This sequence belongs to the conotoxin M superfamily. In terms of tissue distribution, expressed by the venom duct.

The protein resides in the secreted. This Conus regius (Crown cone) protein is Conotoxin reg3.17.